Consider the following 256-residue polypeptide: Ribonuclease 3 (256 aa).

The RNase III domain maps to 3–125 (LEALQQRLGY…IFGAVFLDGG (123 aa)). Glutamate 38 is a Mg(2+) binding site. Residue aspartate 42 is part of the active site. Mg(2+) contacts are provided by aspartate 111 and glutamate 114. Glutamate 114 is a catalytic residue. The DRBM domain occupies 152–222 (DAKTLLQEYL…AKLALEEAHR (71 aa)). The interval 227-256 (LVKRSRAERTGKTRKQATPPDPQLSLRLKE) is disordered.

It belongs to the ribonuclease III family. As to quaternary structure, homodimer. Mg(2+) serves as cofactor.

It localises to the cytoplasm. It carries out the reaction Endonucleolytic cleavage to 5'-phosphomonoester.. In terms of biological role, digests double-stranded RNA. Involved in the processing of primary rRNA transcript to yield the immediate precursors to the large and small rRNAs (23S and 16S). Processes some mRNAs, and tRNAs when they are encoded in the rRNA operon. Processes pre-crRNA and tracrRNA of type II CRISPR loci if present in the organism. This is Ribonuclease 3 from Ralstonia nicotianae (strain ATCC BAA-1114 / GMI1000) (Ralstonia solanacearum).